Reading from the N-terminus, the 250-residue chain is Low affinity immunoglobulin gamma Fc region receptor III-A (250 aa).

A signal peptide spans 1–20 (MWRLLSPTALLLLVSAGTRA). The Extracellular portion of the chain corresponds to 21 to 207 (ADLSKAMVVL…TSTFLPHWYQ (187 aa)). 2 consecutive Ig-like C2-type domains span residues 32–105 (PEWN…LEVH) and 120–189 (EGDT…VNIT). 2 disulfides stabilise this stretch: Cys47–Cys89 and Cys128–Cys172. 4 N-linked (GlcNAc...) asparagine glycosylation sites follow: Asn63, Asn133, Asn180, and Asn187. A helical membrane pass occupies residues 208-228 (IAFFLVTALLFVVDTGLHVAV). Over 229 to 250 (QRDLQSSVKEWKDGKVTWSHGP) the chain is Cytoplasmic.

As to quaternary structure, forms a heterooligomeric complex with ITAM-containing signaling subunits FCER1G. Interacts (via transmembrane domain) with signaling subunits; this interaction is a prerequisite for receptor complex expression on the cell surface and intracellular signal transduction. Binds the Fc region of antigen-complexed IgG.

It is found in the cell membrane. Receptor for the invariable Fc fragment of immunoglobulin gamma (IgG). Optimally activated upon binding of clustered antigen-IgG complexes displayed on cell surfaces, triggers lysis of antibody-coated cells, a process known as antibody-dependent cellular cytotoxicity (ADCC). Does not bind free monomeric IgG, thus avoiding inappropriate effector cell activation in the absence of antigenic trigger. Mediates IgG effector functions on natural killer (NK) cells. Binds antigen-IgG complexes generated upon infection and triggers NK cell-dependent cytokine production and degranulation to limit viral load and propagation. Fc-binding subunit that associates with FCER1G adapter to form functional signaling complexes. Following the engagement of antigen-IgG complexes, triggers phosphorylation of immunoreceptor tyrosine-based activation motif (ITAM)-containing adapter with subsequent activation of phosphatidylinositol 3-kinase signaling and sustained elevation of intracellular calcium that ultimately drive NK cell activation. Mediates enhanced ADCC in response to afucosylated IgGs. The chain is Low affinity immunoglobulin gamma Fc region receptor III-A from Felis catus (Cat).